The following is a 750-amino-acid chain: Neprilysin (750 aa).

Gly-2 carries the N-myristoyl glycine lipid modification. Residues 2-28 lie on the Cytoplasmic side of the membrane; sequence GRSESQMDITDINAPKPKKKQRWTPLE. Ser-4 and Ser-6 each carry phosphoserine. The short motif at 16–23 is the Stop-transfer sequence element; sequence PKPKKKQR. The helical; Signal-anchor for type II membrane protein transmembrane segment at 29–51 threads the bilayer; it reads ISLSVLVLLLTIIAVTMIALYAT. At 52-750 the chain is on the extracellular side; sequence YDDGICKSSD…MNPERKCRVW (699 aa). The Peptidase M13 domain maps to 56-750; that stretch reads ICKSSDCIKS…MNPERKCRVW (695 aa). 6 disulfides stabilise this stretch: Cys-57/Cys-62, Cys-80/Cys-735, Cys-88/Cys-695, Cys-143/Cys-411, Cys-234/Cys-242, and Cys-621/Cys-747. Arg-103 contributes to the a peptide binding site. Asn-145 and Asn-211 each carry an N-linked (GlcNAc...) asparagine glycan. N-linked (GlcNAc...) asparagine glycans are attached at residues Asn-285, Asn-311, and Asn-325. A Zn(2+)-binding site is contributed by His-584. Glu-585 is an active-site residue. Residue His-588 participates in Zn(2+) binding. Asn-628 carries an N-linked (GlcNAc...) asparagine glycan. Zn(2+) is bound at residue Glu-647. The active-site Proton donor is the Asp-651.

It belongs to the peptidase M13 family. The cofactor is Zn(2+). In terms of processing, myristoylation is a determinant of membrane targeting. Glycosylation at Asn-628 is necessary both for surface expression and neutral endopeptidase activity.

The protein localises to the cell membrane. The catalysed reaction is Preferential cleavage of polypeptides between hydrophobic residues, particularly with Phe or Tyr at P1'.. It carries out the reaction substance P + H2O = substance P(1-9) + L-Leu-L-Met-NH2. It catalyses the reaction substance P + H2O = substance P(1-7) + L-Phe-Gly-L-Leu-L-Met-NH2. The enzyme catalyses neurotensin + H2O = neurotensin(1-11) + L-isoleucyl-L-leucine. The catalysed reaction is neurotensin + H2O = neurotensin(1-10) + L-tyrosyl-L-isoleucyl-L-leucine. Thermolysin-like specificity, but is almost confined on acting on polypeptides of up to 30 amino acids. Biologically important in the destruction of opioid peptides such as Met- and Leu-enkephalins by cleavage of a Gly-Phe bond. Catalyzes cleavage of bradykinin, substance P and neurotensin peptides. Able to cleave angiotensin-1, angiotensin-2 and angiotensin 1-9. Involved in the degradation of the atrial natriuretic factor (ANF). Displays UV-inducible elastase activity toward skin preelastic and elastic fibers. This Mus musculus (Mouse) protein is Neprilysin.